The primary structure comprises 428 residues: Glutamate-1-semialdehyde 2,1-aminomutase (428 aa).

Lys-267 carries the N6-(pyridoxal phosphate)lysine modification.

This sequence belongs to the class-III pyridoxal-phosphate-dependent aminotransferase family. HemL subfamily. Homodimer. Pyridoxal 5'-phosphate serves as cofactor.

It localises to the cytoplasm. It carries out the reaction (S)-4-amino-5-oxopentanoate = 5-aminolevulinate. Its pathway is porphyrin-containing compound metabolism; protoporphyrin-IX biosynthesis; 5-aminolevulinate from L-glutamyl-tRNA(Glu): step 2/2. It participates in porphyrin-containing compound metabolism; chlorophyll biosynthesis. The polypeptide is Glutamate-1-semialdehyde 2,1-aminomutase (Prochlorococcus marinus (strain MIT 9303)).